The chain runs to 315 residues: Calumenin (315 aa).

Positions 1-19 (MDLRQFLLCLSLCTAFALS) are cleaved as a signal peptide. A Phosphotyrosine modification is found at Tyr-47. Residue Thr-65 is modified to Phosphothreonine. EF-hand domains lie at 68–103 (ESKE…AQKR), 104–139 (WIHE…YVLD), 151–186 (QMMV…DEYD), 188–223 (MKDI…HDGN), 229–264 (WVKT…SDYD), and 265–300 (HAEA…FVGS). The residue at position 69 (Ser-69) is a Phosphoserine. Positions 81, 83, 85, 92, 117, 119, 121, and 128 each coordinate Ca(2+). N-linked (GlcNAc...) asparagine glycosylation is present at Asn-131. Asp-164 lines the Ca(2+) pocket. Residue Lys-165 is modified to N6-acetyllysine. Residues Asp-166, Asp-168, Glu-175, Asp-201, Asn-203, Asp-205, Glu-212, Asp-242, Asn-244, Asp-246, Arg-248, and Glu-253 each contribute to the Ca(2+) site. Position 254 is a phosphothreonine (Thr-254). Phosphoserine is present on residues Ser-261 and Ser-277. Residues Asp-278, Asn-280, Asp-282, Lys-284, and Glu-289 each coordinate Ca(2+). A Prevents secretion from ER motif is present at residues 312-315 (HDEF).

The protein belongs to the CREC family. In terms of assembly, interacts with GGCX.

It is found in the endoplasmic reticulum membrane. The protein localises to the golgi apparatus. The protein resides in the secreted. Its subcellular location is the melanosome. It localises to the sarcoplasmic reticulum lumen. Functionally, involved in regulation of vitamin K-dependent carboxylation of multiple N-terminal glutamate residues. Seems to inhibit gamma-carboxylase GGCX. Binds 7 calcium ions with a low affinity. This Mesocricetus auratus (Golden hamster) protein is Calumenin (CALU).